We begin with the raw amino-acid sequence, 269 residues long: Myelin protein zero-like protein 1 (269 aa).

The signal sequence occupies residues 1-35; it reads MAAPAGAGALIASPDRRRCLWSVLAAALGLLTYGV. Positions 36–146 constitute an Ig-like V-type domain; that stretch reads SALEVYTPKE…VKNPPDIVVQ (111 aa). The Extracellular segment spans residues 36–162; it reads SALEVYTPKE…YVVEKEILPA (127 aa). N-linked (GlcNAc...) asparagine glycans are attached at residues Asn50, Asn64, and Asn130. An intrachain disulfide couples Cys58 to Cys135. Residues 163 to 183 form a helical membrane-spanning segment; it reads FPVWVVVGIVTAVVLGLTLLI. Residues 184–269 are Cytoplasmic-facing; sequence TMILAVIYRR…SVVYADIRKN (86 aa). Residues 202 to 238 are disordered; the sequence is GCNTSENVSPVKQVSRKSPSDTEGLVKSLPSGSHQGP. The segment covering 203 to 213 has biased composition (polar residues); it reads CNTSENVSPVK. Residues Ser206, Ser210, Ser219, and Ser221 each carry the phosphoserine modification. The ITIM motif 1 motif lies at 239-244; that stretch reads VIYAQL. Tyr241 carries the post-translational modification Phosphotyrosine. Position 260 is a phosphoserine (Ser260). An ITIM motif 2 motif is present at residues 261–266; sequence VVYADI. Tyr263 carries the post-translational modification Phosphotyrosine.

The protein belongs to the myelin P0 protein family. Interacts with phosphorylated PTPN11/SHP-2. In terms of processing, phosphorylated on tyrosine residues upon stimulation with pervanadate and concanavalin-A (ConA). Phosphorylation at Tyr-241 and Tyr-263 is required for interaction with PTPN11/SHP-2. Dephosphorylated by PTPN11/SHP-2 (in vitro). N-glycosylated.

The protein localises to the membrane. In terms of biological role, cell surface receptor, which is involved in signal transduction processes. Recruits PTPN11/SHP-2 to the cell membrane and is a putative substrate of PTPN11/SHP-2. Is a major receptor for concanavalin-A (ConA) and is involved in cellular signaling induced by ConA, which probably includes Src family tyrosine-protein kinases. May be involved in regulation of integrin-mediated cell motility. This is Myelin protein zero-like protein 1 (MPZL1) from Bos taurus (Bovine).